A 697-amino-acid polypeptide reads, in one-letter code: Phosphoribosylformylglycinamidine synthase subunit PurL (697 aa).

Residue His-34 is part of the active site. ATP-binding residues include Tyr-37 and Lys-76. Glu-78 provides a ligand contact to Mg(2+). Residues 79–82 (SHNH) and Arg-101 each bind substrate. His-80 functions as the Proton acceptor in the catalytic mechanism. Asp-102 provides a ligand contact to Mg(2+). Gln-224 lines the substrate pocket. Residue Asp-250 participates in Mg(2+) binding. 294–296 (ETQ) contributes to the substrate binding site. ATP-binding residues include Asp-472 and Gly-509. Ser-512 contacts substrate.

Belongs to the FGAMS family. In terms of assembly, monomer. Part of the FGAM synthase complex composed of 1 PurL, 1 PurQ and 2 PurS subunits.

It is found in the cytoplasm. It carries out the reaction N(2)-formyl-N(1)-(5-phospho-beta-D-ribosyl)glycinamide + L-glutamine + ATP + H2O = 2-formamido-N(1)-(5-O-phospho-beta-D-ribosyl)acetamidine + L-glutamate + ADP + phosphate + H(+). It participates in purine metabolism; IMP biosynthesis via de novo pathway; 5-amino-1-(5-phospho-D-ribosyl)imidazole from N(2)-formyl-N(1)-(5-phospho-D-ribosyl)glycinamide: step 1/2. In terms of biological role, part of the phosphoribosylformylglycinamidine synthase complex involved in the purines biosynthetic pathway. Catalyzes the ATP-dependent conversion of formylglycinamide ribonucleotide (FGAR) and glutamine to yield formylglycinamidine ribonucleotide (FGAM) and glutamate. The FGAM synthase complex is composed of three subunits. PurQ produces an ammonia molecule by converting glutamine to glutamate. PurL transfers the ammonia molecule to FGAR to form FGAM in an ATP-dependent manner. PurS interacts with PurQ and PurL and is thought to assist in the transfer of the ammonia molecule from PurQ to PurL. The chain is Phosphoribosylformylglycinamidine synthase subunit PurL from Pyrobaculum aerophilum (strain ATCC 51768 / DSM 7523 / JCM 9630 / CIP 104966 / NBRC 100827 / IM2).